A 523-amino-acid polypeptide reads, in one-letter code: MEKRWLNSMLSKGELEYRCRLSKSINSLGPIESEGSIINNMNKNIPSHSDSYNSSYSTVDDLVGIRNFVSDDTFLVRDSNSSSYSIYLDIENQIFEIDNDPSFVSELESSFYSFRNSTYQNNISKNDDSHYDRYMYDTKYSWNNHINSCIDSYLRTQICIDSYILSGSHNYSDSYIYSYICGEGGNSSESESFSIRTSTHGNNLTITESSNDLDNDRTTNYSDFWVICENCHKFNYKRLFKSKMNICEECGYHLKMNSSDRIELLIDPGTWEPMDEDMVSVDPIEWDSEVDPIQWKSQVDPIEGDSEVDLIEGDSEEYKDSSYKDRISSSQIETGLPEAIQTGTGKLNGIPVAIGVMEFEFMGGSMGSVVGEKITRLIDYASNQFLPLILVCASGGARMQEGSLSLMQMAKISSALYDYKYQSNKKLFYVAILTSPTTGGVTASFAMLGDIIIAEPNAYIAFAGKRIIEETLKMEVPEGSQKTEPLFEKGLLDLIVPRNPLKDVVSELFQLHAFVPSNQNSIK.

Residues 224-523 enclose the CoA carboxyltransferase N-terminal domain; the sequence is FWVICENCHK…FVPSNQNSIK (300 aa). Zn(2+) is bound by residues Cys-228, Cys-231, Cys-247, and Cys-250. The C4-type zinc-finger motif lies at 228 to 250; the sequence is CENCHKFNYKRLFKSKMNICEEC.

This sequence belongs to the AccD/PCCB family. Acetyl-CoA carboxylase is a heterohexamer composed of biotin carboxyl carrier protein, biotin carboxylase and 2 subunits each of ACCase subunit alpha and ACCase plastid-coded subunit beta (accD). Zn(2+) is required as a cofactor.

The protein resides in the plastid. It is found in the chloroplast stroma. The enzyme catalyses N(6)-carboxybiotinyl-L-lysyl-[protein] + acetyl-CoA = N(6)-biotinyl-L-lysyl-[protein] + malonyl-CoA. The protein operates within lipid metabolism; malonyl-CoA biosynthesis; malonyl-CoA from acetyl-CoA: step 1/1. In terms of biological role, component of the acetyl coenzyme A carboxylase (ACC) complex. Biotin carboxylase (BC) catalyzes the carboxylation of biotin on its carrier protein (BCCP) and then the CO(2) group is transferred by the transcarboxylase to acetyl-CoA to form malonyl-CoA. This is Acetyl-coenzyme A carboxylase carboxyl transferase subunit beta, chloroplastic from Cucumis sativus (Cucumber).